Reading from the N-terminus, the 173-residue chain is MKVAIFPGSFDPLTLGHLDLIKRGSALFDHLAVAVMTNTSKDAWFTVDERVAQVKEAVAGLDNVSVITATGLTVDLMNKIGADYLMRGVRNVDDFRYEKDIAAMNHYLDDQVETIIFLADPKYQYLSSSLLKEVAMSGGNIAALLPANINEALQARLEKRQMKRVKKENEEAR.

Ser-9 contributes to the substrate binding site. ATP-binding positions include 9-10 (SF) and His-17. Substrate contacts are provided by Lys-41, Thr-73, and Arg-87. ATP is bound by residues 88-90 (GVR), Glu-98, and 123-129 (YQYLSSS).

The protein belongs to the bacterial CoaD family. As to quaternary structure, homohexamer. Mg(2+) is required as a cofactor.

The protein localises to the cytoplasm. The enzyme catalyses (R)-4'-phosphopantetheine + ATP + H(+) = 3'-dephospho-CoA + diphosphate. It functions in the pathway cofactor biosynthesis; coenzyme A biosynthesis; CoA from (R)-pantothenate: step 4/5. Its function is as follows. Reversibly transfers an adenylyl group from ATP to 4'-phosphopantetheine, yielding dephospho-CoA (dPCoA) and pyrophosphate. The chain is Phosphopantetheine adenylyltransferase from Limosilactobacillus fermentum (strain NBRC 3956 / LMG 18251) (Lactobacillus fermentum).